Here is a 327-residue protein sequence, read N- to C-terminus: Undecaprenyl-phosphate 4-deoxy-4-formamido-L-arabinose transferase (327 aa).

2 consecutive transmembrane segments (helical) span residues 236-256 (LSLV…LLVV) and 270-290 (VFTL…GMGL).

Belongs to the glycosyltransferase 2 family.

Its subcellular location is the cell inner membrane. It carries out the reaction UDP-4-deoxy-4-formamido-beta-L-arabinose + di-trans,octa-cis-undecaprenyl phosphate = 4-deoxy-4-formamido-alpha-L-arabinopyranosyl di-trans,octa-cis-undecaprenyl phosphate + UDP. The protein operates within glycolipid biosynthesis; 4-amino-4-deoxy-alpha-L-arabinose undecaprenyl phosphate biosynthesis; 4-amino-4-deoxy-alpha-L-arabinose undecaprenyl phosphate from UDP-4-deoxy-4-formamido-beta-L-arabinose and undecaprenyl phosphate: step 1/2. It functions in the pathway bacterial outer membrane biogenesis; lipopolysaccharide biosynthesis. Catalyzes the transfer of 4-deoxy-4-formamido-L-arabinose from UDP to undecaprenyl phosphate. The modified arabinose is attached to lipid A and is required for resistance to polymyxin and cationic antimicrobial peptides. The polypeptide is Undecaprenyl-phosphate 4-deoxy-4-formamido-L-arabinose transferase (Yersinia enterocolitica serotype O:8 / biotype 1B (strain NCTC 13174 / 8081)).